The chain runs to 539 residues: CTP synthase (539 aa).

Residues 1–267 are amidoligase domain; sequence MTKYIFVTGG…DQKVVDFLHI (267 aa). Ser13 contacts CTP. Position 13 (Ser13) interacts with UTP. 14–19 serves as a coordination point for ATP; sequence SLGKGI. Position 54 (Tyr54) interacts with L-glutamine. ATP is bound at residue Asp71. Positions 71 and 141 each coordinate Mg(2+). CTP-binding positions include 148 to 150, 188 to 193, and Lys224; these read DME and KSKPTQ. UTP is bound by residues 188–193 and Lys224; that span reads KSKPTQ. In terms of domain architecture, Glutamine amidotransferase type-1 spans 294–537; the sequence is KITLVGKYVE…IGAASGLQVD (244 aa). Gly356 provides a ligand contact to L-glutamine. The active-site Nucleophile; for glutamine hydrolysis is Cys383. Residues 384 to 387, Glu407, and Arg465 each bind L-glutamine; that span reads LGMQ. Active-site residues include His510 and Glu512.

The protein belongs to the CTP synthase family. As to quaternary structure, homotetramer.

It catalyses the reaction UTP + L-glutamine + ATP + H2O = CTP + L-glutamate + ADP + phosphate + 2 H(+). The catalysed reaction is L-glutamine + H2O = L-glutamate + NH4(+). The enzyme catalyses UTP + NH4(+) + ATP = CTP + ADP + phosphate + 2 H(+). Its pathway is pyrimidine metabolism; CTP biosynthesis via de novo pathway; CTP from UDP: step 2/2. Its activity is regulated as follows. Allosterically activated by GTP, when glutamine is the substrate; GTP has no effect on the reaction when ammonia is the substrate. The allosteric effector GTP functions by stabilizing the protein conformation that binds the tetrahedral intermediate(s) formed during glutamine hydrolysis. Inhibited by the product CTP, via allosteric rather than competitive inhibition. Its function is as follows. Catalyzes the ATP-dependent amination of UTP to CTP with either L-glutamine or ammonia as the source of nitrogen. Regulates intracellular CTP levels through interactions with the four ribonucleotide triphosphates. This is CTP synthase from Lactobacillus delbrueckii subsp. bulgaricus (strain ATCC BAA-365 / Lb-18).